The sequence spans 482 residues: MVKRTVATNGDASGAHRAKKMSKTHASHIINAQEDYKHMYLSVQPLDIFCWGTGSMCELGLGPLAKNKEVKRPRLNPFLPRDEAKIISFAVGGMHTLALDEESNVWSWGCNDVGALGRDTSNAKEQLKDMDADDSSDDEDGDLNELESTPAKIPRESFPPLAEGHKVVQLAATDNMSCALFSNGEVYAWGTFRCNEGILGFYQDKIKIQKTPWKVPTFSKYNIVQLAPGKDHILFLDEEGMVFAWGNGQQNQLGRKVMERFRLKTLDPRPFGLRHVKYIASGENHCFALTKDNKLVSWGLNQFGQCGVSEDVEDGALVTKPKRLALPDNVVIRSIAAGEHHSLILSQDGDLYSCGRLDMFEVGIPKDNLPEYTYKDVHGKARAVPLPTKLNNVPKFKSVAAGSHHSVAVAQNGIAYSWGFGETYAVGLGPFEDDTEVPTRIKNTATQDHNIILVGCGGQFSVSGGVKLSDEDAEKRADEMDD.

Over residues 1-11 the composition is skewed to polar residues; that stretch reads MVKRTVATNGD. The segment at 1–22 is disordered; that stretch reads MVKRTVATNGDASGAHRAKKMS. The short motif at 15-26 is the Nuclear localization signal element; the sequence is AHRAKKMSKTHA. RCC1 repeat units follow at residues 45–101, 103–152, 183–238, 239–291, 292–347, 349–411, and 412–466; these read PLDI…ALDE, SNVW…TPAK, NGEV…FLDE, EGMV…ALTK, DNKL…ILSQ, GDLY…AVAQ, and NGIA…SGGV. A disordered region spans residues 128–158; it reads KDMDADDSSDDEDGDLNELESTPAKIPRESF. The segment covering 131–145 has biased composition (acidic residues); sequence DADDSSDDEDGDLNE. Serine 135 and serine 136 each carry phosphoserine.

Component of a multicomponent complex composed of six to seven proteins, which has a collective molecular mass greater than 150 kDa. Interacts with GSP1 and YRB2. In terms of processing, phosphorylated; possibly by KSP1.

The protein localises to the nucleus. In terms of biological role, guanine nucleotide exchange factor that promotes the exchange of GSP1/GSP2-bound GDP by GTP and controls RNA metabolism and transport. Involved in yeast pheromone response pathway and in mRNA metabolism. Involved in nuclear pore complex (NPC) assembly and required for mRNA and ribosome nuclear export. Binds chromatin and is involved NPC-mediated transcriptional control. This Saccharomyces cerevisiae (strain ATCC 204508 / S288c) (Baker's yeast) protein is Guanine nucleotide exchange factor SRM1 (SRM1).